A 188-amino-acid chain; its full sequence is Inosine triphosphate pyrophosphatase (188 aa).

Position 11-16 (11-16) interacts with ITP; that stretch reads TGNKHK. Position 39 (Glu-39) interacts with Mg(2+). ITP-binding positions include Lys-51, 67 to 68, Lys-84, 143 to 146, and 171 to 172; these read DT, FGWN, and HR.

This sequence belongs to the HAM1 NTPase family. As to quaternary structure, homodimer. The cofactor is Mg(2+). Mn(2+) serves as cofactor.

Its subcellular location is the cytoplasm. It localises to the nucleus. The enzyme catalyses ITP + H2O = IMP + diphosphate + H(+). The catalysed reaction is dITP + H2O = dIMP + diphosphate + H(+). It catalyses the reaction XTP + H2O = XMP + diphosphate + H(+). In terms of biological role, pyrophosphatase that hydrolyzes non-canonical purine nucleotides such as inosine triphosphate (ITP), deoxyinosine triphosphate (dITP) or xanthosine 5'-triphosphate (XTP) to their respective monophosphate derivatives. The enzyme does not distinguish between the deoxy- and ribose forms. Probably excludes non-canonical purines from RNA and DNA precursor pools, thus preventing their incorporation into RNA and DNA and avoiding chromosomal lesions. The protein is Inosine triphosphate pyrophosphatase of Schizosaccharomyces pombe (strain 972 / ATCC 24843) (Fission yeast).